A 507-amino-acid chain; its full sequence is Maturase K (507 aa).

It belongs to the intron maturase 2 family. MatK subfamily.

The protein localises to the plastid. Its subcellular location is the chloroplast. In terms of biological role, usually encoded in the trnK tRNA gene intron. Probably assists in splicing its own and other chloroplast group II introns. This is Maturase K from Ranunculus repens (Creeping buttercup).